Here is a 432-residue protein sequence, read N- to C-terminus: Trigger factor (432 aa).

One can recognise a PPIase FKBP-type domain in the interval 161 to 246 (GKRVSIDFVG…VNKVEARQLP (86 aa)).

The protein belongs to the FKBP-type PPIase family. Tig subfamily.

The protein localises to the cytoplasm. The enzyme catalyses [protein]-peptidylproline (omega=180) = [protein]-peptidylproline (omega=0). Involved in protein export. Acts as a chaperone by maintaining the newly synthesized protein in an open conformation. Functions as a peptidyl-prolyl cis-trans isomerase. The sequence is that of Trigger factor from Vibrio vulnificus (strain CMCP6).